Here is a 253-residue protein sequence, read N- to C-terminus: Imidazole glycerol phosphate synthase subunit HisF (253 aa).

Catalysis depends on residues Asp11 and Asp130.

Belongs to the HisA/HisF family. Heterodimer of HisH and HisF.

The protein resides in the cytoplasm. It catalyses the reaction 5-[(5-phospho-1-deoxy-D-ribulos-1-ylimino)methylamino]-1-(5-phospho-beta-D-ribosyl)imidazole-4-carboxamide + L-glutamine = D-erythro-1-(imidazol-4-yl)glycerol 3-phosphate + 5-amino-1-(5-phospho-beta-D-ribosyl)imidazole-4-carboxamide + L-glutamate + H(+). It functions in the pathway amino-acid biosynthesis; L-histidine biosynthesis; L-histidine from 5-phospho-alpha-D-ribose 1-diphosphate: step 5/9. IGPS catalyzes the conversion of PRFAR and glutamine to IGP, AICAR and glutamate. The HisF subunit catalyzes the cyclization activity that produces IGP and AICAR from PRFAR using the ammonia provided by the HisH subunit. The sequence is that of Imidazole glycerol phosphate synthase subunit HisF from Caldanaerobacter subterraneus subsp. tengcongensis (strain DSM 15242 / JCM 11007 / NBRC 100824 / MB4) (Thermoanaerobacter tengcongensis).